The primary structure comprises 276 residues: Biotin synthase (276 aa).

The region spanning 1–226 is the Radical SAM core domain; it reads MKKIYLCAIS…EAIIMLAGGR (226 aa). Residues Cys17, Cys21, and Cys24 each contribute to the [4Fe-4S] cluster site. [2Fe-2S] cluster is bound by residues Cys61, Cys95, and Cys153.

The protein belongs to the radical SAM superfamily. Biotin synthase family. Homodimer. [4Fe-4S] cluster is required as a cofactor. The cofactor is [2Fe-2S] cluster.

The enzyme catalyses (4R,5S)-dethiobiotin + (sulfur carrier)-SH + 2 reduced [2Fe-2S]-[ferredoxin] + 2 S-adenosyl-L-methionine = (sulfur carrier)-H + biotin + 2 5'-deoxyadenosine + 2 L-methionine + 2 oxidized [2Fe-2S]-[ferredoxin]. It participates in cofactor biosynthesis; biotin biosynthesis; biotin from 7,8-diaminononanoate: step 2/2. Catalyzes the conversion of dethiobiotin (DTB) to biotin by the insertion of a sulfur atom into dethiobiotin via a radical-based mechanism. The polypeptide is Biotin synthase (Nautilia profundicola (strain ATCC BAA-1463 / DSM 18972 / AmH)).